A 698-amino-acid polypeptide reads, in one-letter code: Long-chain-fatty-acid--CoA ligase 1 (698 aa).

Met1 carries the N-acetylmethionine modification. A 3'-nitrotyrosine modification is found at Tyr9. Residues 25–45 (LPTNTLMGFGAFAALTTFWYA) form a helical; Signal-anchor for type III membrane protein membrane-spanning segment. Residues 46-698 (TRPKPLKPPC…IDDLYSTIKV (653 aa)) are Cytoplasmic-facing. The residue at position 84 (Tyr84) is a Phosphotyrosine. O-linked (GlcNAc) serine glycosylation occurs at Ser135. An N6-acetyllysine mark is found at Lys207, Lys356, and Lys386. Ser620 bears the Phosphoserine mark. Lys632 bears the N6-acetyllysine mark.

Belongs to the ATP-dependent AMP-binding enzyme family. Requires Mg(2+) as cofactor. Highly expressed in liver, heart, skeletal muscle, kidney and erythroid cells, and to a lesser extent in brain, lung, placenta and pancreas.

It is found in the mitochondrion outer membrane. The protein localises to the peroxisome membrane. It localises to the microsome membrane. The protein resides in the endoplasmic reticulum membrane. The enzyme catalyses a long-chain fatty acid + ATP + CoA = a long-chain fatty acyl-CoA + AMP + diphosphate. It carries out the reaction (5Z,8Z,11Z,14Z)-eicosatetraenoate + ATP + CoA = (5Z,8Z,11Z,14Z)-eicosatetraenoyl-CoA + AMP + diphosphate. The catalysed reaction is 3,7,11,15-tetramethylhexadecanoate + ATP + CoA = phytanoyl-CoA + AMP + diphosphate. It catalyses the reaction hexadecanoate + ATP + CoA = hexadecanoyl-CoA + AMP + diphosphate. The enzyme catalyses (E)-hexadec-2-enoate + ATP + CoA = (2E)-hexadecenoyl-CoA + AMP + diphosphate. It carries out the reaction 2,6,10,14-tetramethylpentadecanoate + ATP + CoA = pristanoyl-CoA + AMP + diphosphate. The catalysed reaction is 14,15-epoxy-(5Z,8Z,11Z)-eicosatrienoate + ATP + CoA = 14,15-epoxy-(5Z,8Z,11Z)-eicosatrienoyl-CoA + AMP + diphosphate. It catalyses the reaction 5-hydroxy-(6E,8Z,11Z,14Z)-eicosatetraenoate + ATP + CoA = 5-hydroxy-(6E,8Z,11Z,14Z)-eicosatetraenoyl-CoA + AMP + diphosphate. The enzyme catalyses 12-hydroxy-(5Z,8Z,10E,14Z)-eicosatetraenoate + ATP + CoA = 12-hydroxy-(5Z,8Z,10E,14Z)-eicosatetraenoyl-CoA + AMP + diphosphate. It carries out the reaction 15-hydroxy-(5Z,8Z,11Z,13E)-eicosatetraenoate + ATP + CoA = 15-hydroxy-(5Z,8Z,11Z,13E)-eicosatetraenoyl-CoA + AMP + diphosphate. The catalysed reaction is (9Z)-octadecenoate + ATP + CoA = (9Z)-octadecenoyl-CoA + AMP + diphosphate. With respect to regulation, inhibited at high temperature and by arachidonate. Catalyzes the conversion of long-chain fatty acids to their active form acyl-CoAs for both synthesis of cellular lipids, and degradation via beta-oxidation. Preferentially uses palmitoleate, oleate and linoleate. Preferentially activates arachidonate than epoxyeicosatrienoic acids (EETs) or hydroxyeicosatrienoic acids (HETEs). In Homo sapiens (Human), this protein is Long-chain-fatty-acid--CoA ligase 1.